Reading from the N-terminus, the 87-residue chain is Large ribosomal subunit protein bL27 (87 aa).

The tract at residues 1 to 20 (MARKRGGSGSKNGRDSNPKY) is disordered.

This sequence belongs to the bacterial ribosomal protein bL27 family.

The protein is Large ribosomal subunit protein bL27 (rpmA) of Treponema pallidum (strain Nichols).